Reading from the N-terminus, the 310-residue chain is Manganese ABC transporter substrate-binding lipoprotein PsaA (310 aa).

A signal peptide spans 1–20; that stretch reads MKKIASVLALFVALLFGLLA. Cys21 is lipidated: N-palmitoyl cysteine. The S-diacylglycerol cysteine moiety is linked to residue Cys21. Mn(2+) contacts are provided by His68, His140, Glu206, and Asp281.

This sequence belongs to the bacterial solute-binding protein 9 family. Lipoprotein receptor antigen (Lrai) subfamily.

The protein resides in the cell membrane. Functionally, part of the ATP-binding cassette (ABC) transport system PsaABC involved in manganese import. Binds manganese with high affinity and specificity and delivers it to the membrane permease for translocation into the cytoplasm. Also acts as an adhesin which is involved on adherence to extracellular matrix. The sequence is that of Manganese ABC transporter substrate-binding lipoprotein PsaA from Streptococcus pneumoniae.